Consider the following 688-residue polypeptide: MARKYPLDKFRNFGIMAHIDAGKTTTTERILFYTGINHKIGETHDGASTMDWMVQEQERGITITSAATTCAWKEHELNIIDTPGHVDFTVEVERSLRVLDGAVTVLDAKSGVEPQTETVWRQADKYGVPRMIYVNKMDATGADFFRCISTVRDRLKGNAVPIQIPIGSEENFQGMIDLIRNVAILFYDDLGKDMREEAIPAEYAEKAEEYRAAMIEAIAEADEELMMKYLDGEEITEEELKAGLRKATIANEIYPCICGSSYKNKGVQQMIDGVVDYLPSPLDIPAVKGTNLEGEEAERNAADGEPLSALAFKIATDPFVGKLAYTRIYSGIMESGSYVLNSTKGKKERIGRLVKMHSNSRQEVESLEAGELGAVIGLKNTSTGDTLCSEKDPIILESMEFPEPVISVAIEPKTKAAQEKMGMALAKLAEEDPTFKTWTNEETGQTIIAGMGELHLDIIVDRLKREFKVECNVGAPQVAYKETIRKAVKAEAKYAKQSGGKGQYGHAVIEMEPTEGEYVFENAIVGGAIPREYIPAVDNGIQEASLNGIIAGYNVINFKVRLVHGSYHEVDSSEMAFKIAGSMAFKNAMSKADPVLLEPMMKVEITVPEEYMGDVIGDVNSRRGRMEGMEAVNGAQVIRAFVPLSEMFGYATSLRSRTQGRGVYSMVFDHYEEVPKSIQEQVAGNKAK.

The 275-residue stretch at 8–282 folds into the tr-type G domain; that stretch reads DKFRNFGIMA…GVVDYLPSPL (275 aa). GTP-binding positions include 17 to 24, 81 to 85, and 135 to 138; these read AHIDAGKT, DTPGH, and NKMD.

It belongs to the TRAFAC class translation factor GTPase superfamily. Classic translation factor GTPase family. EF-G/EF-2 subfamily.

The protein localises to the cytoplasm. In terms of biological role, catalyzes the GTP-dependent ribosomal translocation step during translation elongation. During this step, the ribosome changes from the pre-translocational (PRE) to the post-translocational (POST) state as the newly formed A-site-bound peptidyl-tRNA and P-site-bound deacylated tRNA move to the P and E sites, respectively. Catalyzes the coordinated movement of the two tRNA molecules, the mRNA and conformational changes in the ribosome. The chain is Elongation factor G from Clostridium botulinum (strain Alaska E43 / Type E3).